The following is a 101-amino-acid chain: MEPVDPNLEPWKHPGSQPTTACSNCYCKVCCWHCQLCFLKKGLGISYGKKKRKPRRGPPQGSKDHQTLIPKQPLPQSQRVSAGQEESKKKVESKAKTDRFA.

The segment at 1 to 20 (MEPVDPNLEPWKHPGSQPTT) is disordered. Residues 1-24 (MEPVDPNLEPWKHPGSQPTTACSN) are interaction with human CREBBP. The transactivation stretch occupies residues 1 to 48 (MEPVDPNLEPWKHPGSQPTTACSNCYCKVCCWHCQLCFLKKGLGISYG). Zn(2+)-binding residues include C22, C25, and C27. The interval 22-37 (CSNCYCKVCCWHCQLC) is cysteine-rich. At K28 the chain carries N6-acetyllysine; by host PCAF. 4 residues coordinate Zn(2+): C30, H33, C34, and C37. A core region spans residues 38–48 (FLKKGLGISYG). Positions 48-101 (GKKKRKPRRGPPQGSKDHQTLIPKQPLPQSQRVSAGQEESKKKVESKAKTDRFA) are disordered. Positions 49 to 57 (KKKRKPRRG) match the Nuclear localization signal, RNA-binding (TAR), and protein transduction motif. Positions 49–86 (KKKRKPRRGPPQGSKDHQTLIPKQPLPQSQRVSAGQEE) are interaction with the host capping enzyme RNGTT. K50 and K51 each carry N6-acetyllysine; by host EP300 and GCN5L2. R52 carries the post-translational modification Asymmetric dimethylarginine; by host PRMT6. K71 participates in a covalent cross-link: Glycyl lysine isopeptide (Lys-Gly) (interchain with G-Cter in ubiquitin). Basic and acidic residues predominate over residues 85 to 101 (EESKKKVESKAKTDRFA).

The protein belongs to the lentiviruses Tat family. As to quaternary structure, interacts with host CCNT1. Associates with the P-TEFb complex composed at least of Tat, P-TEFb (CDK9 and CCNT1), TAR RNA, RNA Pol II. Recruits the HATs CREBBP, TAF1/TFIID, EP300, PCAF and GCN5L2. Interacts with host KAT5/Tip60; this interaction targets the latter to degradation. Interacts with the host deacetylase SIRT1. Interacts with host capping enzyme RNGTT; this interaction stimulates RNGTT. Binds to host KDR, and to the host integrins ITGAV/ITGB3 and ITGA5/ITGB1. Interacts with host KPNB1/importin beta-1 without previous binding to KPNA1/importin alpha-1. Interacts with EIF2AK2. Interacts with host nucleosome assembly protein NAP1L1; this interaction may be required for the transport of Tat within the nucleus, since the two proteins interact at the nuclear rim. Interacts with host C1QBP/SF2P32; this interaction involves lysine-acetylated Tat. Interacts with the host chemokine receptors CCR2, CCR3 and CXCR4. Interacts with host DPP4/CD26; this interaction may trigger an anti-proliferative effect. Interacts with host LDLR. Interacts with the host extracellular matrix metalloproteinase MMP1. Interacts with host PRMT6; this interaction mediates Tat's methylation. Interacts with, and is ubiquitinated by MDM2/Hdm2. Interacts with host PSMC3 and HTATIP2. Interacts with STAB1; this interaction may overcome SATB1-mediated repression of IL2 and IL2RA (interleukin) in T cells by binding to the same domain than HDAC1. Interacts (when acetylated) with human CDK13, thereby increasing HIV-1 mRNA splicing and promoting the production of the doubly spliced HIV-1 protein Nef. Interacts with host TBP; this interaction modulates the activity of transcriptional pre-initiation complex. Interacts with host RELA. Interacts with host PLSCR1; this interaction negatively regulates Tat transactivation activity by altering its subcellular distribution. In terms of processing, asymmetrical arginine methylation by host PRMT6 seems to diminish the transactivation capacity of Tat and affects the interaction with host CCNT1. Post-translationally, acetylation by EP300, CREBBP, GCN5L2/GCN5 and PCAF regulates the transactivation activity of Tat. EP300-mediated acetylation of Lys-50 promotes dissociation of Tat from the TAR RNA through the competitive binding to PCAF's bromodomain. In addition, the non-acetylated Tat's N-terminus can also interact with PCAF. PCAF-mediated acetylation of Lys-28 enhances Tat's binding to CCNT1. Lys-50 is deacetylated by SIRT1. Polyubiquitination by host MDM2 does not target Tat to degradation, but activates its transactivation function and fosters interaction with CCNT1 and TAR RNA. In terms of processing, phosphorylated by EIF2AK2 on serine and threonine residues adjacent to the basic region important for TAR RNA binding and function. Phosphorylation of Tat by EIF2AK2 is dependent on the prior activation of EIF2AK2 by dsRNA.

The protein localises to the host nucleus. It is found in the host nucleolus. The protein resides in the host cytoplasm. Its subcellular location is the secreted. Functionally, transcriptional activator that increases RNA Pol II processivity, thereby increasing the level of full-length viral transcripts. Recognizes a hairpin structure at the 5'-LTR of the nascent viral mRNAs referred to as the transactivation responsive RNA element (TAR) and recruits the cyclin T1-CDK9 complex (P-TEFb complex) that will in turn hyperphosphorylate the RNA polymerase II to allow efficient elongation. The CDK9 component of P-TEFb and other Tat-activated kinases hyperphosphorylate the C-terminus of RNA Pol II that becomes stabilized and much more processive. Other factors such as HTATSF1/Tat-SF1, SUPT5H/SPT5, and HTATIP2 are also important for Tat's function. Besides its effect on RNA Pol II processivity, Tat induces chromatin remodeling of proviral genes by recruiting the histone acetyltransferases (HATs) CREBBP, EP300 and PCAF to the chromatin. This also contributes to the increase in proviral transcription rate, especially when the provirus integrates in transcriptionally silent region of the host genome. To ensure maximal activation of the LTR, Tat mediates nuclear translocation of NF-kappa-B by interacting with host RELA. Through its interaction with host TBP, Tat may also modulate transcription initiation. Tat can reactivate a latently infected cell by penetrating in it and transactivating its LTR promoter. In the cytoplasm, Tat is thought to act as a translational activator of HIV-1 mRNAs. Its function is as follows. Extracellular circulating Tat can be endocytosed by surrounding uninfected cells via the binding to several surface receptors such as CD26, CXCR4, heparan sulfate proteoglycans (HSPG) or LDLR. Neurons are rarely infected, but they internalize Tat via their LDLR. Through its interaction with nuclear HATs, Tat is potentially able to control the acetylation-dependent cellular gene expression. Modulates the expression of many cellular genes involved in cell survival, proliferation or in coding for cytokines or cytokine receptors. Tat plays a role in T-cell and neurons apoptosis. Tat induced neurotoxicity and apoptosis probably contribute to neuroAIDS. Circulating Tat also acts as a chemokine-like and/or growth factor-like molecule that binds to specific receptors on the surface of the cells, affecting many cellular pathways. In the vascular system, Tat binds to ITGAV/ITGB3 and ITGA5/ITGB1 integrins dimers at the surface of endothelial cells and competes with bFGF for heparin-binding sites, leading to an excess of soluble bFGF. The sequence is that of Protein Tat from Human immunodeficiency virus type 1 group M subtype A (isolate U455) (HIV-1).